A 376-amino-acid polypeptide reads, in one-letter code: uncharacterized protein (376 aa).

Residue serine 59 is modified to Phosphoserine. The Rho-GAP domain occupies 139–367 (VAIEITVQRQ…CLIEHHNAIF (229 aa)). The interval 307-338 (RPSRSPKKSNDFETATPWDLLSDEGEGPDASS) is disordered.

This is an uncharacterized protein from Arabidopsis thaliana (Mouse-ear cress).